Reading from the N-terminus, the 417-residue chain is Serine--tRNA ligase (417 aa).

225–227 (TLE) lines the L-serine pocket. 256-258 (RQE) provides a ligand contact to ATP. E279 provides a ligand contact to L-serine. 343 to 346 (EVSS) contributes to the ATP binding site. T379 is an L-serine binding site.

This sequence belongs to the class-II aminoacyl-tRNA synthetase family. Type-1 seryl-tRNA synthetase subfamily. As to quaternary structure, homodimer. The tRNA molecule binds across the dimer.

It is found in the cytoplasm. The catalysed reaction is tRNA(Ser) + L-serine + ATP = L-seryl-tRNA(Ser) + AMP + diphosphate + H(+). The enzyme catalyses tRNA(Sec) + L-serine + ATP = L-seryl-tRNA(Sec) + AMP + diphosphate + H(+). Its pathway is aminoacyl-tRNA biosynthesis; selenocysteinyl-tRNA(Sec) biosynthesis; L-seryl-tRNA(Sec) from L-serine and tRNA(Sec): step 1/1. In terms of biological role, catalyzes the attachment of serine to tRNA(Ser). Is also able to aminoacylate tRNA(Sec) with serine, to form the misacylated tRNA L-seryl-tRNA(Sec), which will be further converted into selenocysteinyl-tRNA(Sec). The protein is Serine--tRNA ligase of Mycoplasma genitalium (strain ATCC 33530 / DSM 19775 / NCTC 10195 / G37) (Mycoplasmoides genitalium).